We begin with the raw amino-acid sequence, 355 residues long: Chorismate synthase (355 aa).

R48 provides a ligand contact to NADP(+). FMN contacts are provided by residues 125 to 127, 239 to 240, G280, 295 to 299, and R321; these read RSS, NA, and KPVAT.

This sequence belongs to the chorismate synthase family. Homotetramer. The cofactor is FMNH2.

The enzyme catalyses 5-O-(1-carboxyvinyl)-3-phosphoshikimate = chorismate + phosphate. Its pathway is metabolic intermediate biosynthesis; chorismate biosynthesis; chorismate from D-erythrose 4-phosphate and phosphoenolpyruvate: step 7/7. Its function is as follows. Catalyzes the anti-1,4-elimination of the C-3 phosphate and the C-6 proR hydrogen from 5-enolpyruvylshikimate-3-phosphate (EPSP) to yield chorismate, which is the branch point compound that serves as the starting substrate for the three terminal pathways of aromatic amino acid biosynthesis. This reaction introduces a second double bond into the aromatic ring system. In Flavobacterium psychrophilum (strain ATCC 49511 / DSM 21280 / CIP 103535 / JIP02/86), this protein is Chorismate synthase.